The sequence spans 864 residues: MTSAELRKAFLDFFVKQGHTAVHSSPVVPGNDPTLLFTNAGMVQFKETFLGQETREYKRATSVQRCIRAGGKHNDLENVGYTARHHTFFEMLGNFSFGDYFKREAIQYAWTFLTEELGLPEEKLWITVFEEDREAEDIWLKEMGVSAERFSRCGAKDNFWSMGDTGPCGPCSEIFYDHGADVAGGPPGSPDEDGDRYIEIWNLVFMQFDRSEDGTLTPLPKPSVDTGMGLERLAAVMQNQHNNYDIDLFQAIVKKASELTGEKDLANSSLRVIADHIRSCAFMVVDGVLPSNEGRGYVLRRIIRRAIRHGYKLGQTDIFFYQLVPTLVEQMGEAYPELVKEQANVERALKLEEERFAETLENGMKILEEDIAQLSGSVISGSTAFKLYDTYGFPLDLTADVARERNLSVDEAGFEQEMEAQRARARSASNFGAQSKNKVDYTGSTHFIGYEQDEAEAEIAAIFVDNVSVEKASEGQEAIVILNQTPFYAESGGQVGDQGSLTEGMNSFHVDNCQKQGAAFLHIGKVTAGSISVGQTILAHIDVKARRASERNHSATHLLHAALRTVLGTHVGQKGSLVQPERLRFDFSHFEPISAEQLLEIEQLVNHNIMLNAQVMMEEMDIEAAKAKGAMALFGEKYGDVVRVVDMGDFSIELCGGTHVNWTGEIGPFRITSESGIASGVRRIEAVTGEAAWQTIYDMEKSLLNIAANLKTDKPQVESKVAQLVTEQKELEKQLKQLQSKLASSQGDDLASSVTEVNGVNVLAAELEGADVNTLRETLDKLRDKLEPAAIVLAAVDGDKVSLVAGVSKSITGNVKAGELVNHVAQQVGGKGGGRPDMAQAGGKDPSKLKEALASVKEWVATVA.

The Zn(2+) site is built by H553, H557, C655, and H659. The interval 828-847 (VGGKGGGRPDMAQAGGKDPS) is disordered.

It belongs to the class-II aminoacyl-tRNA synthetase family. It depends on Zn(2+) as a cofactor.

The protein localises to the cytoplasm. The enzyme catalyses tRNA(Ala) + L-alanine + ATP = L-alanyl-tRNA(Ala) + AMP + diphosphate. Functionally, catalyzes the attachment of alanine to tRNA(Ala) in a two-step reaction: alanine is first activated by ATP to form Ala-AMP and then transferred to the acceptor end of tRNA(Ala). Also edits incorrectly charged Ser-tRNA(Ala) and Gly-tRNA(Ala) via its editing domain. The chain is Alanine--tRNA ligase from Hydrogenovibrio crunogenus (strain DSM 25203 / XCL-2) (Thiomicrospira crunogena).